The following is a 310-amino-acid chain: Translocator protein BipD (310 aa).

Coiled coils occupy residues 127–171 (DPIL…LQDY) and 250–299 (DTAR…AIST).

The protein belongs to the invasin protein D family.

The protein localises to the secreted. Required for invasion of epithelial cells, as well as for survival within host cells, escape from endocytic vesicles and subsequent actin-tail formation. Probably regulates the secretion of effectors BipB and BipC and their final integration into the target cell membrane. The sequence is that of Translocator protein BipD (bipD) from Burkholderia thailandensis (strain ATCC 700388 / DSM 13276 / CCUG 48851 / CIP 106301 / E264).